A 610-amino-acid chain; its full sequence is Glutamine--fructose-6-phosphate aminotransferase [isomerizing] (610 aa).

Catalysis depends on C2, which acts as the Nucleophile; for GATase activity. Positions C2 to D217 constitute a Glutamine amidotransferase type-2 domain. SIS domains are found at residues I284 to S424 and L453 to P600. K605 functions as the For Fru-6P isomerization activity in the catalytic mechanism.

As to quaternary structure, homodimer.

It is found in the cytoplasm. The enzyme catalyses D-fructose 6-phosphate + L-glutamine = D-glucosamine 6-phosphate + L-glutamate. Catalyzes the first step in hexosamine metabolism, converting fructose-6P into glucosamine-6P using glutamine as a nitrogen source. This is Glutamine--fructose-6-phosphate aminotransferase [isomerizing] from Clostridium perfringens (strain 13 / Type A).